The primary structure comprises 131 residues: Fumarate reductase subunit C (131 aa).

3 consecutive transmembrane segments (helical) span residues 30 to 50, 57 to 77, and 109 to 129; these read EGTAVPAVWFSIELIFGLFAL, WMGFVGFLQNPVVVILNLITL, and IIKGLWVVTAVVTVVILYVAL.

Belongs to the FrdC family. As to quaternary structure, part of an enzyme complex containing four subunits: a flavoprotein (FrdA), an iron-sulfur protein (FrdB), and two hydrophobic anchor proteins (FrdC and FrdD).

Its subcellular location is the cell inner membrane. In terms of biological role, two distinct, membrane-bound, FAD-containing enzymes are responsible for the catalysis of fumarate and succinate interconversion; fumarate reductase is used in anaerobic growth, and succinate dehydrogenase is used in aerobic growth. Anchors the catalytic components of the fumarate reductase complex to the cell inner membrane, binds quinones. This Salmonella heidelberg (strain SL476) protein is Fumarate reductase subunit C.